Here is a 485-residue protein sequence, read N- to C-terminus: Adenosylhomocysteinase (485 aa).

Substrate-binding residues include T60, D146, and E208. 209–211 (TTT) is an NAD(+) binding site. The substrate site is built by K238 and D242. Residues N243, 272–277 (GYGDVG), E295, N330, 351–353 (IGH), and N399 contribute to the NAD(+) site.

This sequence belongs to the adenosylhomocysteinase family. The cofactor is NAD(+).

The protein localises to the cytoplasm. The enzyme catalyses S-adenosyl-L-homocysteine + H2O = L-homocysteine + adenosine. It participates in amino-acid biosynthesis; L-homocysteine biosynthesis; L-homocysteine from S-adenosyl-L-homocysteine: step 1/1. May play a key role in the regulation of the intracellular concentration of adenosylhomocysteine. This is Adenosylhomocysteinase from Streptomyces avermitilis (strain ATCC 31267 / DSM 46492 / JCM 5070 / NBRC 14893 / NCIMB 12804 / NRRL 8165 / MA-4680).